Reading from the N-terminus, the 906-residue chain is MVSFGGLARKIFGSSNDRRVKTLRQRAEQITALEKNYENLTDEQLQAKTAEFRAALAEGKSLDSLLPDAFATAREAAKRVLGMRPFDVQLIGGMVLHERGIAEMRTGEGKTLMATLPVYLNALEGKGVHVVTVNDYLATRDAETMGRLYNFLGLTVGVIKHGLDDDERRAAYACDITYGTNNELGFDYLRDNMKYERAQMVQRPHNYAIVDEVDSILIDEARTPLIISGPLEDRSDFYNLIDTFIPPLAEEDYEVDEKQKTAIFTEVGTEKVEKLLEAAGHLKGESLYDIENVAVVHHLNNALRAHKLFQRDKDYIVRNDEIVIIDEFTGRMMPGRRYSEGLHQALEAKEHVTIQPENQTLASITFQNYFRMYNKLSGMTGTAATEAEEFGNIYGLEVLEIPTNLPVQRIDEDDEVYRTVEEKYRAIVRDIRASHEKGQPILVGTTSIEKSEQLAERLRREGIKGFQVLNARYHEQEAYIIAQAGVPGAVTIATNMAGRGTDIQLGGNLEMRVRQELSDVPEGSEREEKIAAIKADIAQLKEKALAAGGLYVLATERHESRRIDNQLRGRSGRQGDPGRSKFFLSLQDDLMRIFGSDRMDGMLQKLGLKEDEAIVHPWINKALEKAQKKVEARNFEIRKNLLKYDDVMNDQRKVIFEQRLEMMDEEDLTETVAEMRHEVIEDMVILRIPKDAYAEKWDIAGLKQDIASKLNLDLPVEEWAKEEDIAEEEFENRIKEAADKAAAEKAERFGPQIMTYVEKSVIMQSLDNLWREHLVNLDHLRSVVGFRGYAQRDPLNEYKTEAFELFQTMLANLREVVISQLMRVEIVGEAPPEPQLPPMAGLHIDGTTGENDFDEAIWAEHQHDDRIVPPAQRDPADPRTWGKVSRNEPCPCGSGKKYKHCHGAFE.

ATP-binding positions include Gln89, 107-111, and Asp502; that span reads GEGKT. Positions 890, 892, 901, and 902 each coordinate Zn(2+).

The protein belongs to the SecA family. In terms of assembly, monomer and homodimer. Part of the essential Sec protein translocation apparatus which comprises SecA, SecYEG and auxiliary proteins SecDF-YajC and YidC. Requires Zn(2+) as cofactor.

The protein resides in the cell inner membrane. It is found in the cytoplasm. It catalyses the reaction ATP + H2O + cellular proteinSide 1 = ADP + phosphate + cellular proteinSide 2.. Functionally, part of the Sec protein translocase complex. Interacts with the SecYEG preprotein conducting channel. Has a central role in coupling the hydrolysis of ATP to the transfer of proteins into and across the cell membrane, serving both as a receptor for the preprotein-SecB complex and as an ATP-driven molecular motor driving the stepwise translocation of polypeptide chains across the membrane. In Brucella suis biovar 1 (strain 1330), this protein is Protein translocase subunit SecA.